A 241-amino-acid polypeptide reads, in one-letter code: Uridylate kinase (241 aa).

Lysine 13–glycine 16 lines the ATP pocket. UMP is bound at residue glycine 55. ATP contacts are provided by glycine 56 and arginine 60. Residues aspartate 75 and threonine 136–threonine 143 contribute to the UMP site. 4 residues coordinate ATP: threonine 163, glutamine 164, tyrosine 169, and aspartate 172.

The protein belongs to the UMP kinase family. As to quaternary structure, homohexamer.

Its subcellular location is the cytoplasm. It catalyses the reaction UMP + ATP = UDP + ADP. The protein operates within pyrimidine metabolism; CTP biosynthesis via de novo pathway; UDP from UMP (UMPK route): step 1/1. With respect to regulation, inhibited by UTP. In terms of biological role, catalyzes the reversible phosphorylation of UMP to UDP. The sequence is that of Uridylate kinase from Parvibaculum lavamentivorans (strain DS-1 / DSM 13023 / NCIMB 13966).